A 131-amino-acid polypeptide reads, in one-letter code: Large ribosomal subunit protein bL17 (131 aa).

This sequence belongs to the bacterial ribosomal protein bL17 family. Part of the 50S ribosomal subunit. Contacts protein L32.

This chain is Large ribosomal subunit protein bL17, found in Thermotoga maritima (strain ATCC 43589 / DSM 3109 / JCM 10099 / NBRC 100826 / MSB8).